Reading from the N-terminus, the 132-residue chain is Phosphoribosyl-ATP pyrophosphatase (132 aa).

This sequence belongs to the PRA-PH family.

It is found in the cytoplasm. It carries out the reaction 1-(5-phospho-beta-D-ribosyl)-ATP + H2O = 1-(5-phospho-beta-D-ribosyl)-5'-AMP + diphosphate + H(+). It participates in amino-acid biosynthesis; L-histidine biosynthesis; L-histidine from 5-phospho-alpha-D-ribose 1-diphosphate: step 2/9. In Acidovorax sp. (strain JS42), this protein is Phosphoribosyl-ATP pyrophosphatase.